A 247-amino-acid chain; its full sequence is Transcription factor bHLH92 (247 aa).

One can recognise a bHLH domain in the interval Glu-85–Leu-134.

In terms of assembly, homodimer.

It localises to the nucleus. The polypeptide is Transcription factor bHLH92 (BHLH92) (Arabidopsis thaliana (Mouse-ear cress)).